We begin with the raw amino-acid sequence, 157 residues long: uncharacterized protein (157 aa).

Residues 1 to 23 (MEALRRAHEATLRLLLCRPWASG) form the signal peptide.

Its subcellular location is the secreted. This is an uncharacterized protein from Mus musculus (Mouse).